We begin with the raw amino-acid sequence, 203 residues long: MTLRSFLIFFLSSLILAGCSSVPESVTSVEWQAHEQRLETIHDFQATGKLGYIGPDQRQSLNFFWKHSTALSQLRLTTVLGQTALKLTITPQGATVETYDDQVLSARNANQLIYRLTGLMMPVDHMPDWLLGLPTDADTFQLSPANTLQTLDKQIGLNDWKIAYERYGDVEWHEQTLPLPNKLKLTTSDVKINLVITKWNITQ.

Positions 1-18 (MTLRSFLIFFLSSLILAG) are cleaved as a signal peptide. Cys19 is lipidated: N-palmitoyl cysteine. Cys19 carries S-diacylglycerol cysteine lipidation.

The protein belongs to the LolB family. Monomer.

The protein localises to the cell outer membrane. Functionally, plays a critical role in the incorporation of lipoproteins in the outer membrane after they are released by the LolA protein. The polypeptide is Outer-membrane lipoprotein LolB (Vibrio parahaemolyticus serotype O3:K6 (strain RIMD 2210633)).